Reading from the N-terminus, the 181-residue chain is CASP-like protein 2C1 (181 aa).

Over 1 to 7 (MALEIPK) the chain is Cytoplasmic. The helical transmembrane segment at 8-28 (IEAILRGIAILLLVSTACLVG) threads the bilayer. Residues 29 to 49 (LDSQTKFVIVYEKEVTYKDLH) are Extracellular-facing. A helical transmembrane segment spans residues 50 to 70 (ALVVLVYVDAVAAAYNLLQLC). The Cytoplasmic portion of the chain corresponds to 71 to 98 (RCSVSALSKGNFKGSYRYLSWACFVLDQ). The helical transmembrane segment at 99 to 119 (LAAYTTFAAHSAALQHSVLGI) threads the bilayer. The Extracellular portion of the chain corresponds to 120–140 (TGAKVFQWMKWCNRFTRFCFQ). Residues 141-161 (IGGALTCGYIASVLMVMISFI) form a helical membrane-spanning segment. Topologically, residues 162–181 (SAFNLFRLYSPKHFLRLKGT) are cytoplasmic.

Belongs to the Casparian strip membrane proteins (CASP) family. In terms of assembly, homodimer and heterodimers.

It is found in the cell membrane. This is CASP-like protein 2C1 from Populus trichocarpa (Western balsam poplar).